Here is a 289-residue protein sequence, read N- to C-terminus: MTAQVTCVWDLKATLGEGPIWHGDTLWFVDIKQRKIHNYHPATGERFSFDAPDQVTFLAPIVGATGFVVGLKTGIHRFHPATGFSLLLEVEDAALNNRPNDATVDAQGRLWFGTMHDGEENNSGSLYRMDLTGVARMDRDICITNGPCVSPDGKTFYHTDTLEKTIYAFDLAEDGLLSNKRVFVQFALGDDVYPDGSVVDSEGYLWTALWGGFGAVRFSPQGDAVTRIELPAPNVTKPCFGGPDLKTLYFTTARKGLSDETLAQYPLAGGVFAVPVDVAGQPQHEVRLV.

Position 17 (Glu-17) interacts with Fe(2+). 4 residues coordinate D-xylono-1,5-lactone: Arg-98, Asn-100, Glu-119, and Asn-145. Positions 145 and 195 each coordinate Fe(2+). The active-site Proton donor/acceptor is Asp-195.

This sequence belongs to the SMP-30/CGR1 family. It depends on Fe(2+) as a cofactor.

It catalyses the reaction D-xylono-1,5-lactone + H2O = D-xylonate + H(+). Its function is as follows. Involved in the degradation of D-xylose. Catalyzes the hydrolysis of D-xylonolactone to D-xylonate. The protein is D-xylonolactone lactonase of Caulobacter vibrioides (strain ATCC 19089 / CIP 103742 / CB 15) (Caulobacter crescentus).